The following is a 616-amino-acid chain: Chaperone protein HscA (616 aa).

The protein belongs to the heat shock protein 70 family.

Its function is as follows. Chaperone involved in the maturation of iron-sulfur cluster-containing proteins. Has a low intrinsic ATPase activity which is markedly stimulated by HscB. Involved in the maturation of IscU. This Photorhabdus laumondii subsp. laumondii (strain DSM 15139 / CIP 105565 / TT01) (Photorhabdus luminescens subsp. laumondii) protein is Chaperone protein HscA.